We begin with the raw amino-acid sequence, 541 residues long: Zinc finger protein 655 (541 aa).

The disordered stretch occupies residues 1–22 (MEEVTSQEAAESPRGHFQPLEN). C2H2-type zinc fingers lie at residues 243 to 265 (YKCD…QRIH), 271 to 293 (YKCK…KRIH), 334 to 356 (YKCG…QRTH), 361 to 383 (CKCT…QRLH), 411 to 433 (YSCN…QRIH), and 439 to 461 (HECN…HKMH). The segment at 495-517 (FDCDAWEENFSQRAHLIQHERVH) adopts a C2H2-type 7; degenerate zinc-finger fold.

Belongs to the krueppel C2H2-type zinc-finger protein family. In terms of assembly, interacts with VAV1 and CDK4. Interacts with INTS13; promoting association with the integrator complex.

The protein localises to the nucleus. Its function is as follows. Probable transcription factor. The sequence is that of Zinc finger protein 655 (Znf655) from Mus musculus (Mouse).